A 3530-amino-acid chain; its full sequence is Unconventional myosin-XV (3530 aa).

3 disordered regions span residues 1–46 (MAKE…RTPK), 615–710 (AGMD…PAHV), and 730–1057 (EVPP…QKTL). The span at 663-681 (PPVPPRPPSSGPPPAPPLS) shows a compositional bias: pro residues. 3 stretches are compositionally biased toward low complexity: residues 682–693 (PALSGLPRPASP), 753–763 (AAFGFPGASPR), and 823–835 (SPAP…RLGP). The span at 836–850 (PGSPLPGSPRPPSPP) shows a compositional bias: pro residues. The span at 859–869 (RSSLNLPSRLP) shows a compositional bias: low complexity. The segment covering 903 to 913 (PLEHRESPREP) has biased composition (basic and acidic residues). Residues 1027 to 1038 (TKPPTPAPPKDV) are compositionally biased toward pro residues. The Myosin motor domain maps to 1222–1899 (DGVEDMTQLE…LYQLLESMRE (678 aa)). 1315-1322 (GESGSGKT) is a binding site for ATP. Positions 1323–1350 (EATKLILRYLAAMNQKREVMQQIKILEA) form a coiled coil. Residues 1792-1799 (FMRCLKPN) are actin-binding. The segment at 1888–2029 (EHLYQLLESM…AQVPQVAPVR (142 aa)) is neck or regulatory domain. IQ domains follow at residues 1902-1924 (LNLA…RFRS), 1925-1954 (LRHK…SLVK), and 1955-1976 (FRSL…AEWR). Residues 2030–3530 (TPRLQAEPRV…TLPPSEITLL (1501 aa)) form a tail region. A MyTH4 1 domain is found at 2065–2217 (MLTVPLRTPL…PTQLEWTATY (153 aa)). Disordered regions lie at residues 2311-2381 (AASR…GEPA), 2414-2446 (YRMK…IPGL), 2490-2509 (AEKP…GPPA), and 2644-2665 (TSAP…LEPP). A compositionally biased stretch (polar residues) spans 2349–2371 (GYSSHNQDGTNGETEAQRGTATH). Residues 2417–2427 (KGGGQPGGGSS) are compositionally biased toward gly residues. One can recognise an SH3 domain in the interval 2867–2953 (KDSDYVVAVR…PSELVQPAAA (87 aa)). The region spanning 3050–3204 (FTKTPLQESL…PSSIELRAML (155 aa)) is the MyTH4 2 domain. Residues 3209 to 3530 (SKRQLFLLPG…TLPPSEITLL (322 aa)) enclose the FERM domain.

Belongs to the TRAFAC class myosin-kinesin ATPase superfamily. Myosin family. Interacts with the third PDZ domain of WHRN which is necessary for localization of WHRN to stereocilium tips. Interacts with EPS8. Interacts with FASLG. As to expression, highly expressed in pituitary. Also expressed at lower levels in adult brain, kidney, liver, lung, pancreas, placenta and skeletal muscle. Not expressed in brain. In the pituitary, highly expressed in anterior gland cells.

Its subcellular location is the cell projection. The protein resides in the stereocilium. It localises to the cytoplasm. The protein localises to the cytoskeleton. Its function is as follows. Myosins are actin-based motor molecules with ATPase activity. Unconventional myosins serve in intracellular movements. Their highly divergent tails are presumed to bind to membranous compartments, which would be moved relative to actin filaments. Required for the arrangement of stereocilia in mature hair bundles. The sequence is that of Unconventional myosin-XV (MYO15A) from Homo sapiens (Human).